The chain runs to 331 residues: Germ cell-specific gene 1-like protein (331 aa).

Topologically, residues 1–8 are cytoplasmic; it reads MKTSRRGR. The chain crosses the membrane as a helical span at residues 9–29; that stretch reads ALLAVALNLLALLFATTAFLT. Topologically, residues 30-132 are extracellular; sequence THWCQGTQRV…FIDLAPASEK (103 aa). A helical transmembrane segment spans residues 133-153; sequence GVLWLSVVSEVLYILLLVVGF. The Cytoplasmic portion of the chain corresponds to 154-173; it reads SLMCLELFHSSNVIDGLKLN. The helical transmembrane segment at 174-194 threads the bilayer; the sequence is AFAAVFTVLSGLLGMVAHMMY. The Extracellular segment spans residues 195-217; that stretch reads TQVFQVTVSLGPEDWRPHSWDYG. Residues 218–238 form a helical membrane-spanning segment; it reads WSFCLAWGSFTCCMAASVTTL. Residues 239-331 are Cytoplasmic-facing; sequence NSYTKTVIEF…RQCWVLGHWV (93 aa).

It belongs to the GSG1 family. In terms of assembly, component of the inner core of AMPAR complex. AMPAR complex consists of an inner core made of 4 pore-forming GluA/GRIA proteins (GRIA1, GRIA2, GRIA3 and GRIA4) and 4 major auxiliary subunits arranged in a twofold symmetry. One of the two pairs of distinct binding sites is occupied either by CNIH2, CNIH3 or CACNG2, CACNG3. The other harbors CACNG2, CACNG3, CACNG4, CACNG8 or GSG1L. This inner core of AMPAR complex is complemented by outer core constituents binding directly to the GluA/GRIA proteins at sites distinct from the interaction sites of the inner core constituents. Outer core constituents include at least PRRT1, PRRT2, CKAMP44/SHISA9, FRRS1L and NRN1. The proteins of the inner and outer core serve as a platform for other, more peripherally associated AMPAR constituents. Alone or in combination, these auxiliary subunits control the gating and pharmacology of the AMPAR complex and profoundly impact their biogenesis and protein processing.

It is found in the cell membrane. The protein resides in the synapse. As a component of the inner core of AMPAR complex, modifies AMPA receptor (AMPAR) gating. The chain is Germ cell-specific gene 1-like protein (GSG1L) from Homo sapiens (Human).